The sequence spans 1288 residues: Peroxidasin homolog (1288 aa).

The first 16 residues, 1-16 (MNLLLYLLLLVPWVLG), serve as a signal peptide directing secretion. In terms of domain architecture, LRRNT spans 17–51 (SEDGCPAKCTCDKKGFTVDCSNAGLTRIPKGISSN). 7 LRR repeats span residues 27-49 (CDKK…KGIS), 50-72 (SNVR…DLEG), 73-96 (FPLL…ILDH), 97-120 (LPEL…ASES), 122-143 (PLAS…WLLQ), 145-168 (FPEL…LFEN), and 204-227 (AYCT…LLKC). The LRRCT domain maps to 180–228 (NPWNCDCRVTKVKALLRKVEWERKAYCTNPVELRHQAIDEVEESLLKCA). Residue Asn247 is glycosylated (N-linked (GlcNAc...) asparagine). Residues 304 to 323 (LRQSHHSNGAPQFTYKPRDN) form a disordered region. Ig-like C2-type domains follow at residues 314 to 400 (PQFT…FSLD) and 407 to 494 (PNIY…AKLT). Cys335 and Cys384 are oxidised to a cystine. LRR repeat units lie at residues 356 to 381 (SSRK…DSGR) and 387 to 412 (VNSL…IYEG). Cys428 and Cys478 are joined by a disulfide. Asn594 carries N-linked (GlcNAc...) asparagine glycosylation. A disulfide bridge links Cys624 with Cys640. Asp718 is a heme b binding site. The active-site Proton acceptor is His719. A Ca(2+)-binding site is contributed by Asp720. 2 disulfide bridges follow: Cys739–Cys749 and Cys743–Cys770. An N-linked (GlcNAc...) asparagine glycan is attached at Asn740. Positions 802, 804, 806, and 808 each coordinate Ca(2+). Asn857 carries an N-linked (GlcNAc...) asparagine glycan. Glu876 and His972 together coordinate heme b. 2 LRR repeats span residues 998 to 1022 (KAFF…LFAS) and 1049 to 1073 (SLDL…EYRQ). 2 disulfide bridges follow: Cys1075–Cys1132 and Cys1173–Cys1200. The LRR 12 repeat unit spans residues 1168 to 1189 (LARLLCDNGDEIDRIQKDVFMY).

It belongs to the peroxidase family. XPO subfamily. Ca(2+) is required as a cofactor. Heme b serves as cofactor.

It localises to the secreted. The protein resides in the extracellular space. It is found in the extracellular matrix. The enzyme catalyses L-lysyl-[collagen] + L-methionyl-[collagen] + H2O2 = [collagen]-L-lysyl-N-S-L-methionyl-[collagen] + 2 H2O + H(+). It carries out the reaction bromide + H2O2 = hypobromite + H2O. The catalysed reaction is L-lysyl-[collagen] + L-methionyl-[collagen] + hypobromite = [collagen]-L-lysyl-N-S-L-methionyl-[collagen] + bromide + H2O + H(+). It catalyses the reaction L-tyrosyl-[protein] + bromide + H2O2 + H(+) = 3-bromo-L-tyrosyl-[protein] + 2 H2O. The enzyme catalyses hypobromite + L-tyrosyl-[protein] + H(+) = 3-bromo-L-tyrosyl-[protein] + H2O. Functionally, catalyzes the two-electron oxidation of bromide by hydrogen peroxide and generates hypobromite as a reactive intermediate which mediates the formation of sulfilimine cross-links between methionine and hydroxylysine residues within an uncross-linked collagen IV NC1 hexamer. Plays a role in the attachment of tissues and in axonal guidance during early developmental stages. May functionally antagonize the peroxidasin pxn-2 to maintain neuronal development. The chain is Peroxidasin homolog from Caenorhabditis briggsae.